The sequence spans 1369 residues: Neurofascin (1369 aa).

The signal sequence occupies residues 1–25; it reads MVLHSHQLTYAGIAFALCLHHLISA. Residues 26 to 1235 are Extracellular-facing; the sequence is IEVPLDSNIQ…NHVDIATQGW (1210 aa). Ig-like C2-type domains lie at 42–138 and 144–231; these read PTIT…LQVS and PKEK…NPYT. Intrachain disulfides connect C64–C119 and C163–C214. N241, N247, and N323 each carry an N-linked (GlcNAc...) asparagine glycan. 4 Ig-like C2-type domains span residues 262–350, 355–442, 448–535, and 539–626; these read PSFM…ISVR, PYWL…AFVS, PRIL…VRLE, and PTRI…AYLT. Cystine bridges form between C286–C334 and C376–C426. N-linked (GlcNAc...) asparagine glycosylation is found at N427, N464, and N501. 2 cysteine pairs are disulfide-bonded: C470-C519 and C561-C610. Fibronectin type-III domains follow at residues 645–740, 745–838, 843–945, and 949–1057; these read RPRD…TSGA, NPTG…SGED, APTD…TPEG, and SPRY…TPAS. A glycan (N-linked (GlcNAc...) asparagine) is linked at N692. The span at 730-739 shows a compositional bias: polar residues; that stretch reads MPSERYQTSG. The disordered stretch occupies residues 730 to 753; the sequence is MPSERYQTSGARPEINPTGVQGAG. Residues N767, N793, N853, N994, and N1009 are each glycosylated (N-linked (GlcNAc...) asparagine). Positions 1078 to 1097 are disordered; it reads TTATPTTETPPTEIPTTAIP. N-linked (GlcNAc...) asparagine glycans are attached at residues N1133, N1150, N1156, and N1171. The Fibronectin type-III 5 domain occupies 1133 to 1222; that stretch reads NGSSIWDIRA…SYITFTTSSA (90 aa). The chain crosses the membrane as a helical span at residues 1236 to 1256; the sequence is FIGLMCAIALLVLILLIVCFI. The Cytoplasmic segment spans residues 1257 to 1369; sequence KRSRGGKYPV…SPVNAIYSLA (113 aa). Composition is skewed to basic and acidic residues over residues 1266 to 1282 and 1289 to 1298; these read VRDNKDEHLNPEDKNVE and RSLESDEDNK. The segment at 1266-1369 is disordered; sequence VRDNKDEHLN…SPVNAIYSLA (104 aa). Polar residues predominate over residues 1300-1313; the sequence is LPNSQTSLDGTIKQ.

It belongs to the immunoglobulin superfamily. L1/neurofascin/NgCAM family. Post-translationally, N-glycosylated and O-glycosylated. In terms of processing, may be proteolytically cleaved at Arg-636.

Its subcellular location is the cell membrane. In terms of biological role, cell adhesion, ankyrin-binding protein which may be involved in neurite extension, axonal guidance, synaptogenesis, myelination and neuron-glial cell interactions. In Gallus gallus (Chicken), this protein is Neurofascin (NFASC).